Here is a 431-residue protein sequence, read N- to C-terminus: Enolase (431 aa).

Residue Gln-167 coordinates (2R)-2-phosphoglycerate. Glu-209 functions as the Proton donor in the catalytic mechanism. 3 residues coordinate Mg(2+): Asp-246, Glu-290, and Asp-317. Residues Lys-342, Arg-371, Ser-372, and Lys-393 each contribute to the (2R)-2-phosphoglycerate site. Residue Lys-342 is the Proton acceptor of the active site.

It belongs to the enolase family. In terms of assembly, component of the RNA degradosome, a multiprotein complex involved in RNA processing and mRNA degradation. It depends on Mg(2+) as a cofactor.

The protein localises to the cytoplasm. It localises to the secreted. The protein resides in the cell surface. The enzyme catalyses (2R)-2-phosphoglycerate = phosphoenolpyruvate + H2O. It functions in the pathway carbohydrate degradation; glycolysis; pyruvate from D-glyceraldehyde 3-phosphate: step 4/5. In terms of biological role, catalyzes the reversible conversion of 2-phosphoglycerate (2-PG) into phosphoenolpyruvate (PEP). It is essential for the degradation of carbohydrates via glycolysis. The polypeptide is Enolase (Serratia proteamaculans (strain 568)).